The following is a 339-amino-acid chain: Adenosine deaminase (339 aa).

Residues His-15 and His-17 each contribute to the Zn(2+) site. Substrate is bound by residues His-17, Asp-19, and Gly-172. His-199 serves as a coordination point for Zn(2+). Glu-202 acts as the Proton donor in catalysis. Residue Asp-279 coordinates Zn(2+).

It belongs to the metallo-dependent hydrolases superfamily. Adenosine and AMP deaminases family. Adenosine deaminase subfamily. The cofactor is Zn(2+).

The enzyme catalyses adenosine + H2O + H(+) = inosine + NH4(+). It catalyses the reaction 2'-deoxyadenosine + H2O + H(+) = 2'-deoxyinosine + NH4(+). Its function is as follows. Catalyzes the hydrolytic deamination of adenosine and 2-deoxyadenosine. The sequence is that of Adenosine deaminase from Lacticaseibacillus casei (strain BL23) (Lactobacillus casei).